Consider the following 1060-residue polypeptide: Carbamoyl phosphate synthase large chain (1060 aa).

Residues 1–400 are carboxyphosphate synthetic domain; the sequence is MPRDESINKV…SLNKAIRSLD (400 aa). ATP is bound by residues arginine 127, arginine 167, glycine 173, glycine 174, glutamine 206, valine 208, glutamate 213, glycine 240, isoleucine 241, histidine 242, glutamine 283, and glutamate 297. One can recognise an ATP-grasp 1 domain in the interval 131–326; that stretch reads DSFMKKLNEP…IAKIAAKIAV (196 aa). Glutamine 283, glutamate 297, and asparagine 299 together coordinate Mg(2+). Glutamine 283, glutamate 297, and asparagine 299 together coordinate Mn(2+). An oligomerization domain region spans residues 401–539; the sequence is IGADGFTETP…YGCYDLEDEV (139 aa). Residues 540-926 are carbamoyl phosphate synthetic domain; sequence EVSDRRKVLI…YKSQLSASMD (387 aa). One can recognise an ATP-grasp 2 domain in the interval 664-858; it reads TEVLNKLGIP…LAKMAARLMM (195 aa). ATP contacts are provided by arginine 700, lysine 739, leucine 741, glutamate 746, glycine 771, valine 772, histidine 773, serine 774, glutamine 814, and glutamate 829. Residues glutamine 814, glutamate 829, and asparagine 831 each contribute to the Mg(2+) site. Mn(2+) contacts are provided by glutamine 814, glutamate 829, and asparagine 831. Residues 925 to 1060 enclose the MGS-like domain; that stretch reads MDLLNEGKVF…VKSLDEYHGM (136 aa). Residues 927-1060 are allosteric domain; sequence LLNEGKVFIS…VKSLDEYHGM (134 aa).

It belongs to the CarB family. As to quaternary structure, composed of two chains; the small (or glutamine) chain promotes the hydrolysis of glutamine to ammonia, which is used by the large (or ammonia) chain to synthesize carbamoyl phosphate. Tetramer of heterodimers (alpha,beta)4. Mg(2+) serves as cofactor. It depends on Mn(2+) as a cofactor.

It catalyses the reaction hydrogencarbonate + L-glutamine + 2 ATP + H2O = carbamoyl phosphate + L-glutamate + 2 ADP + phosphate + 2 H(+). The enzyme catalyses hydrogencarbonate + NH4(+) + 2 ATP = carbamoyl phosphate + 2 ADP + phosphate + 2 H(+). It functions in the pathway amino-acid biosynthesis; L-arginine biosynthesis; carbamoyl phosphate from bicarbonate: step 1/1. The protein operates within pyrimidine metabolism; UMP biosynthesis via de novo pathway; (S)-dihydroorotate from bicarbonate: step 1/3. In terms of biological role, large subunit of the glutamine-dependent carbamoyl phosphate synthetase (CPSase). CPSase catalyzes the formation of carbamoyl phosphate from the ammonia moiety of glutamine, carbonate, and phosphate donated by ATP, constituting the first step of 2 biosynthetic pathways, one leading to arginine and/or urea and the other to pyrimidine nucleotides. The large subunit (synthetase) binds the substrates ammonia (free or transferred from glutamine from the small subunit), hydrogencarbonate and ATP and carries out an ATP-coupled ligase reaction, activating hydrogencarbonate by forming carboxy phosphate which reacts with ammonia to form carbamoyl phosphate. This is Carbamoyl phosphate synthase large chain from Methanothermobacter thermautotrophicus (strain ATCC 29096 / DSM 1053 / JCM 10044 / NBRC 100330 / Delta H) (Methanobacterium thermoautotrophicum).